The following is a 238-amino-acid chain: Peroxisomal biogenesis factor 11 (238 aa).

This sequence belongs to the peroxin-11 family.

The protein localises to the mitochondrion. The protein resides in the peroxisome membrane. Involved in peroxisomal proliferation. Promotes peroxisome division and biogenesis. The chain is Peroxisomal biogenesis factor 11 (pex11) from Schizosaccharomyces pombe (strain 972 / ATCC 24843) (Fission yeast).